The primary structure comprises 423 residues: Large ribosomal subunit protein mL37 (423 aa).

A mitochondrion-targeting transit peptide spans 1 to 29 (MALASGPAMRALAGSARLGLGGYGAPKRG).

It belongs to the mitochondrion-specific ribosomal protein mL37 family. As to quaternary structure, component of the mitochondrial ribosome large subunit (39S) which comprises a 16S rRNA and about 50 distinct proteins.

The protein resides in the mitochondrion. The polypeptide is Large ribosomal subunit protein mL37 (Mrpl37) (Rattus norvegicus (Rat)).